Here is a 134-residue protein sequence, read N- to C-terminus: Lymphocyte antigen 6 complex locus protein G6d (134 aa).

The first 19 residues, Met1–Gly19, serve as a signal peptide directing secretion. Residues Met22–Leu121 enclose the UPAR/Ly6 domain. Intrachain disulfides connect Cys24–Cys48, Cys27–Cys35, Cys42–Cys76, Cys82–Cys101, and Cys102–Cys107. O-linked (GalNAc...) threonine glycosylation is present at Thr68. Residue Asn108 is the site of GPI-anchor amidated asparagine attachment. Residues Gly109 to Gln134 constitute a propeptide, removed in mature form.

As to quaternary structure, homodimer. O-glycosylated.

The protein resides in the cell membrane. This Rattus norvegicus (Rat) protein is Lymphocyte antigen 6 complex locus protein G6d (Ly6g6d).